A 266-amino-acid polypeptide reads, in one-letter code: MARNSRIRITNNDKALYAKLVKNTKAKISRTKKKYGIDLSNEIELPPLESFQTRKEFNEWKRKQESFTNRANQNYQFVKNKYGIVASKAKINEIEKNTKEAQRIVDEQREEIEDKPFISGGKQQGTVGQRMQILSPSQVTGVSRPSDFNFDDVRSYARLRTLEEGMAEKASPDYYDRRMAQMHQNFIEIVEKSFNSYWLTDELVERLKKIPPDDFFELYLIFDEISFEYFDSEGEDVEASEAMLNKIHSYLDRYERGDVNLDLKGF.

Residues 1–73 (MARNSRIRIT…QESFTNRANQ (73 aa)) are disordered. The tract at residues 74–172 (NYQFVKNKYG…EEGMAEKASP (99 aa)) is intermediate; makes extensive contacts with the phage DNA polymerase. Residues 173 to 266 (DYYDRRMAQM…GDVNLDLKGF (94 aa)) form a priming region. Serine 232 carries the O-(5'-phospho-DNA)-serine modification. The segment at 256–258 (RGD) is interaction with the viral DNA polymerase.

Belongs to the phi29likevirus DNA terminal protein family. In terms of assembly, interacts with the viral polymerase; this interaction allows the initiation of TP-primed DNA replication at both viral DNA ends. Binds to ssDNA. Interacts with the replication protein p1. Part of a DNA-gp3-gp16 complex.

The protein resides in the virion. In terms of biological role, acts as a primer for DNA elongation during viral genomic replication. Acts as the small terminase protein during packaging. Recruits the phage DNA polymerase to the bacterial nucleoid. Primer terminal protein (TP) is covalently linked to the 5'-ends of both strands of the genome through a phosphodiester bond between the beta-hydroxyl group of a serine residue and the 5'-phosphate of the terminal deoxyadenylate (dAMP). To start replication, the DNA polymerase forms a heterodimer with a free TP that recognizes the replication origins at both 5' ends of the linear chromosome, and initiates replication using as primer the OH-group of Ser-232 of the TP. Since the polymerase initiates the replication on the second thymine, the TP-dAMP initiation product slides backwards to recover the template information of the first nucleotide. Hydrolyzes host peptidoglycans during virus entry. This is DNA terminal protein (3) from Bacillus subtilis (Bacteriophage B103).